The sequence spans 527 residues: Peptide chain release factor 3 (527 aa).

Residues 9–277 form the tr-type G domain; sequence AKRRTFAIIS…AVVDWAPRPL (269 aa). GTP is bound by residues 18–25, 86–90, and 140–143; these read SHPDAGKT, DTPGH, and NKLD.

The protein belongs to the TRAFAC class translation factor GTPase superfamily. Classic translation factor GTPase family. PrfC subfamily.

The protein resides in the cytoplasm. Functionally, increases the formation of ribosomal termination complexes and stimulates activities of RF-1 and RF-2. It binds guanine nucleotides and has strong preference for UGA stop codons. It may interact directly with the ribosome. The stimulation of RF-1 and RF-2 is significantly reduced by GTP and GDP, but not by GMP. The polypeptide is Peptide chain release factor 3 (Pseudomonas putida (strain ATCC 47054 / DSM 6125 / CFBP 8728 / NCIMB 11950 / KT2440)).